A 131-amino-acid chain; its full sequence is Small ribosomal subunit protein uS11 (131 aa).

The protein belongs to the universal ribosomal protein uS11 family. As to quaternary structure, part of the 30S ribosomal subunit. Interacts with proteins S7 and S18. Binds to IF-3.

In terms of biological role, located on the platform of the 30S subunit, it bridges several disparate RNA helices of the 16S rRNA. Forms part of the Shine-Dalgarno cleft in the 70S ribosome. The chain is Small ribosomal subunit protein uS11 from Trichormus variabilis (strain ATCC 29413 / PCC 7937) (Anabaena variabilis).